The primary structure comprises 344 residues: Phosphoribosylformylglycinamidine cyclo-ligase (344 aa).

Belongs to the AIR synthase family.

Its subcellular location is the cytoplasm. The enzyme catalyses 2-formamido-N(1)-(5-O-phospho-beta-D-ribosyl)acetamidine + ATP = 5-amino-1-(5-phospho-beta-D-ribosyl)imidazole + ADP + phosphate + H(+). The protein operates within purine metabolism; IMP biosynthesis via de novo pathway; 5-amino-1-(5-phospho-D-ribosyl)imidazole from N(2)-formyl-N(1)-(5-phospho-D-ribosyl)glycinamide: step 2/2. The protein is Phosphoribosylformylglycinamidine cyclo-ligase of Laribacter hongkongensis (strain HLHK9).